The chain runs to 409 residues: Tyrosine--tRNA ligase (409 aa).

The 'HIGH' region motif lies at 54–63; it reads PTAPDIHLGH. The 'KMSKS' region signature appears at 238 to 242; the sequence is KMSKS. K241 contributes to the ATP binding site. Positions 347–407 constitute an S4 RNA-binding domain; the sequence is QGILRILREA…GKRKFARVKL (61 aa).

The protein belongs to the class-I aminoacyl-tRNA synthetase family. TyrS type 2 subfamily. As to quaternary structure, homodimer.

The protein resides in the cytoplasm. It catalyses the reaction tRNA(Tyr) + L-tyrosine + ATP = L-tyrosyl-tRNA(Tyr) + AMP + diphosphate + H(+). In terms of biological role, catalyzes the attachment of tyrosine to tRNA(Tyr) in a two-step reaction: tyrosine is first activated by ATP to form Tyr-AMP and then transferred to the acceptor end of tRNA(Tyr). This chain is Tyrosine--tRNA ligase, found in Bordetella pertussis (strain Tohama I / ATCC BAA-589 / NCTC 13251).